Consider the following 290-residue polypeptide: Eukaryotic translation initiation factor 3 subunit G (290 aa).

2 disordered regions span residues 1 to 35 (MSRL…DGTK) and 157 to 200 (ESTG…GERM). The RRM domain maps to 210–288 (ATLRVTNVSE…LILRVEFAKR (79 aa)).

The protein belongs to the eIF-3 subunit G family. As to quaternary structure, component of the eukaryotic translation initiation factor 3 (eIF-3) complex.

The protein localises to the cytoplasm. Functionally, RNA-binding component of the eukaryotic translation initiation factor 3 (eIF-3) complex, which is involved in protein synthesis of a specialized repertoire of mRNAs and, together with other initiation factors, stimulates binding of mRNA and methionyl-tRNAi to the 40S ribosome. The eIF-3 complex specifically targets and initiates translation of a subset of mRNAs involved in cell proliferation. This subunit can bind 18S rRNA. The polypeptide is Eukaryotic translation initiation factor 3 subunit G (tif35) (Aspergillus clavatus (strain ATCC 1007 / CBS 513.65 / DSM 816 / NCTC 3887 / NRRL 1 / QM 1276 / 107)).